A 277-amino-acid chain; its full sequence is Caspase-3 (277 aa).

An N-acetylmethionine modification is found at M1. Propeptides lie at residues 1–9 and 10–28; these read MENTENSVD and SKSI…ESMD. An N6-acetyllysine modification is found at K11. Phosphoserine is present on S26. Active-site residues include H121 and C163. C163 bears the S-nitrosocysteine; in inhibited form mark. (Microbial infection) ADP-riboxanated arginine is present on R207.

Belongs to the peptidase C14A family. As to quaternary structure, heterotetramer that consists of two anti-parallel arranged heterodimers, each one formed by a 17 kDa (p17) and a 12 kDa (p12) subunit. Interacts with BIRC6/bruce. Cleavage by granzyme B, caspase-6, caspase-8 and caspase-10 generates the two active subunits. Additional processing of the propeptides is likely due to the autocatalytic activity of the activated protease. Active heterodimers between the small subunit of caspase-7 protease and the large subunit of caspase-3 also occur and vice versa. Post-translationally, S-nitrosylated on its catalytic site cysteine in unstimulated human cell lines and denitrosylated upon activation of the Fas apoptotic pathway, associated with an increase in intracellular caspase activity. Fas therefore activates caspase-3 not only by inducing the cleavage of the caspase zymogen to its active subunits, but also by stimulating the denitrosylation of its active site thiol. In terms of processing, ubiquitinated by BIRC6; this activity is inhibited by DIABLO/SMAC. (Microbial infection) ADP-riboxanation by C.violaceum CopC blocks CASP3 processing, preventing CASP3 activation and ability to recognize and cleave substrates. Highly expressed in lung, spleen, heart, liver and kidney. Moderate levels in brain and skeletal muscle, and low in testis. Also found in many cell lines, highest expression in cells of the immune system.

It is found in the cytoplasm. The catalysed reaction is Strict requirement for an Asp residue at positions P1 and P4. It has a preferred cleavage sequence of Asp-Xaa-Xaa-Asp-|- with a hydrophobic amino-acid residue at P2 and a hydrophilic amino-acid residue at P3, although Val or Ala are also accepted at this position.. Its activity is regulated as follows. Inhibited by isatin sulfonamides. Inhibited by BIRC6; following inhibition of BIRC6-caspase binding by DIABLO/SMAC, BIRC6 is subjected to caspase cleavage, leading to an increase in active caspases. Its function is as follows. Thiol protease that acts as a major effector caspase involved in the execution phase of apoptosis. Following cleavage and activation by initiator caspases (CASP8, CASP9 and/or CASP10), mediates execution of apoptosis by catalyzing cleavage of many proteins. At the onset of apoptosis, it proteolytically cleaves poly(ADP-ribose) polymerase PARP1 at a '216-Asp-|-Gly-217' bond. Cleaves and activates sterol regulatory element binding proteins (SREBPs) between the basic helix-loop-helix leucine zipper domain and the membrane attachment domain. Cleaves and activates caspase-6, -7 and -9 (CASP6, CASP7 and CASP9, respectively). Cleaves and inactivates interleukin-18 (IL18). Involved in the cleavage of huntingtin. Triggers cell adhesion in sympathetic neurons through RET cleavage. Cleaves and inhibits serine/threonine-protein kinase AKT1 in response to oxidative stress. Acts as an inhibitor of type I interferon production during virus-induced apoptosis by mediating cleavage of antiviral proteins CGAS, IRF3 and MAVS, thereby preventing cytokine overproduction. Also involved in pyroptosis by mediating cleavage and activation of gasdermin-E (GSDME). Cleaves XRCC4 and phospholipid scramblase proteins XKR4, XKR8 and XKR9, leading to promote phosphatidylserine exposure on apoptotic cell surface. Cleaves BIRC6 following inhibition of BIRC6-caspase binding by DIABLO/SMAC. The chain is Caspase-3 (CASP3) from Homo sapiens (Human).